A 158-amino-acid chain; its full sequence is U-limacoditoxin(8)-Dv66 (158 aa).

A signal peptide spans 1–24 (MALRAPWIALCCVLAVLFVVPAAT). The propeptide occupies 25–32 (RDEERQKR). Tandem repeats lie at residues 33 to 78 (GVDF…RQKR) and 79 to 124 (GVDF…RQKR). Residues 33–158 (GVDFGLQRGF…AQDPHGPGRK (126 aa)) form a 3 X 46 AA tandem repeats region. Pro63 carries the proline amide modification. Positions 64 to 78 (GRKRRDAYEMERQKR) are excised as a propeptide. Residues 101-120 (ARAQDPHGPGRKRRDAYEME) are disordered. Proline amide is present on Pro109. Residues 110-124 (GRKRRDAYEMERQKR) constitute a propeptide that is removed on maturation. The 3; half-length repeat unit spans residues 125–158 (GVDFGLQRGFSGSELAKLKLALARAQDPHGPGRK). A Proline amide modification is found at Pro155.

This sequence belongs to the diuretic hormone class 2 family. In terms of tissue distribution, expressed by the venom secretory cell of the spine. The spine is a cuticular structure containing a single large nucleated venom-secreting cell at its base. It is an independent unit capable of producing, storing and injecting venom. On the back of D.vulnerans caterpillars, spines are grouped together by 50 to 100 to form scoli, of which there are eight in D.vulnerans.

It localises to the secreted. In terms of biological role, probable toxin. Does not show insecticidal, antimicrobial and antiparasitic activities. Does not induce increase in intracellular calcium in mouse DRG neurons, suggesting that it does not induce pain. This is U-limacoditoxin(8)-Dv66 from Doratifera vulnerans (Mottled cup moth).